Here is an 821-residue protein sequence, read N- to C-terminus: MGSNLPAQPNLRVTIIAADGLYKRDVFRFPDPFAVATVGGEQTHTTSVIKKTLNPYWNEMFDLRVNEDSILAIQIFDQKKFKKKDQGFLGVINVRIGDVIDLQMGGDEMLTRDLKKSNDNLVVHGKLIINLSTNLSTPIPNQANGLHRSHAQSSTSSGLVPQVSSASHPSVSPGQAEPSAAASNVSLHPQRVPSTTRPTSTVGPVNGGPAPPPNGPQGSRTNLSSFEDSQGRLPAGWERREDNLGRTYYVDHNTRTTTWTRPSSNYNEQTQRTQREANMQLERRAHQSRMLPEDRTGANSPNLQESPQPQPQQAHTPPAGGSASAVSMMATGATTAGTGELPPGWEQRTTPEGRPYFVDHNTRTTTWVDPRRQQYIRMYGHNANGGNTTIQQQPVSQLGPLPSGWEMRLTNTARVYFVDHNTKTTTWDDPRLPSSLDQGVPQYKRDFRRKLIYFRSQPALRIMSGQCHVKVRRNNIFEDSYAEIMRQSASDLKKRLMIKFDGEDGLDYGGLSREFFFLLSHEMFNPFYCLFEYSAHDNYTLQINPHSGVNPEHLNYFKFIGRVVGLAIFHRRFLDSFFIGAFYKMMLRKKVSLQDMEGVDEDLHRNLAWTLENDIEGIIELTFSVDDEKFGERTTIDLKPGGRDIPVTNENKGEYVELVTEWKIVKRVEEQFNAFMSGFNELIPADLVNVFDERELELLIGGIADIDVDDWKKHTDYRGYQEQDEVIQNFWKIVRTWDAEQKSRLLQFTTGTSRIPVNGFKDLQGSDGPRRFTIEKSGDPIALPKSHTCFNRLDLPPYKTHDVLEHKLSIAVEETLGFGQE.

The C2 domain maps to 1-112 (MGSNLPAQPN…QMGGDEMLTR (112 aa)). 2 disordered regions span residues 140-240 (PNQA…WERR) and 255-359 (RTTT…YFVD). Polar residues-rich tracts occupy residues 151 to 173 (AQSS…SVSP), 181 to 201 (AASN…PTST), 217 to 228 (QGSRTNLSSFED), and 255 to 272 (RTTT…QTQR). The WW 1 domain occupies 231 to 264 (GRLPAGWERREDNLGRTYYVDHNTRTTTWTRPSS). The span at 281-296 (LERRAHQSRMLPEDRT) shows a compositional bias: basic and acidic residues. Polar residues predominate over residues 297-306 (GANSPNLQES). A compositionally biased stretch (low complexity) spans 311 to 339 (PQQAHTPPAGGSASAVSMMATGATTAGTG). 2 WW domains span residues 339–372 (GELP…DPRR) and 399–432 (GPLP…DPRL). The 334-residue stretch at 488-821 (SASDLKKRLM…VEETLGFGQE (334 aa)) folds into the HECT domain. C789 functions as the Glycyl thioester intermediate in the catalytic mechanism.

This sequence belongs to the RSP5/NEDD4 family. As to quaternary structure, interacts with creD.

It localises to the cytoplasm. The catalysed reaction is S-ubiquitinyl-[E2 ubiquitin-conjugating enzyme]-L-cysteine + [acceptor protein]-L-lysine = [E2 ubiquitin-conjugating enzyme]-L-cysteine + N(6)-ubiquitinyl-[acceptor protein]-L-lysine.. It functions in the pathway protein modification; protein ubiquitination. E3 ubiquitin-protein ligase which accepts ubiquitin from an E2 ubiquitin-conjugating enzyme in the form of a thioester and then directly transfers the ubiquitin to targeted substrates. Probably involved in the regulatory network controlling carbon source utilization. The protein is Probable E3 ubiquitin-protein ligase hulA (hulA) of Aspergillus niger (strain ATCC MYA-4892 / CBS 513.88 / FGSC A1513).